Consider the following 682-residue polypeptide: Protein SPT2 homolog (682 aa).

An important for interaction with DNA region spans residues 1–569 (MDFREILLIA…PLLSGYRSAQ (569 aa)). A Glycyl lysine isopeptide (Lys-Gly) (interchain with G-Cter in SUMO2) cross-link involves residue lysine 37. Positions 46–82 (AFLRRKEEELRQKALEEKKRKEELVKKRIELKHDKKA) form a coiled coil. A disordered region spans residues 80–170 (KKARAMAKRT…SAPSPMNFTD (91 aa)). Over residues 101 to 111 (VEEKTKKKQLV) the composition is skewed to basic and acidic residues. The span at 121–131 (QEYDVEEEDFI) shows a compositional bias: acidic residues. Over residues 156 to 165 (KAPLKSAPSP) the composition is skewed to low complexity. Lysine 186 participates in a covalent cross-link: Glycyl lysine isopeptide (Lys-Gly) (interchain with G-Cter in SUMO2). The segment covering 187–208 (VVKKAEDRPLTAEELREREFLE) has biased composition (basic and acidic residues). Disordered stretches follow at residues 187 to 533 (VVKK…TKPR) and 549 to 595 (RSSN…DEYD). Composition is skewed to polar residues over residues 267 to 280 (STASEKQAALSSPK), 317 to 334 (STCSPSVPKTPASGTQKS), 371 to 393 (PGSNSGSAPGQPNPGTARPTLSS), 400 to 409 (QNGSSSSGPE), and 419 to 432 (ASNSHLSGRTLNGT). Phosphoserine is present on serine 277. Composition is skewed to low complexity over residues 435-460 (PGRPASSSSGPGRPISGSAGSGRPVG) and 490-504 (SGPGRSISGSIPAGR). An important for interaction with histones region spans residues 570–682 (GPQRLPFPTG…RRKAKKLKRH (113 aa)). Lysine 581 is subject to N6-acetyllysine. The span at 586–595 (YEEDDDDEYD) shows a compositional bias: acidic residues. Serine 596 carries the phosphoserine modification. Basic and acidic residues-rich tracts occupy residues 641-652 (SWKEQQKEEAKS) and 663-672 (EMRREEEELK). A disordered region spans residues 641-682 (SWKEQQKEEAKSLRLGMQEDLEEMRREEEELKRRKAKKLKRH). The stretch at 642–682 (WKEQQKEEAKSLRLGMQEDLEEMRREEEELKRRKAKKLKRH) forms a coiled coil. Positions 673–682 (RRKAKKLKRH) are enriched in basic residues.

It belongs to the SPT2 family. As to quaternary structure, interacts with histones. Interacts with a heterotetrameric complex formed by histone H3 and H4, especially when the histone tetramer is not bound to DNA. Interacts with histone H3.3.

The protein localises to the nucleus. It is found in the nucleolus. Its function is as follows. Histone chaperone that stabilizes pre-existing histone tetramers and regulates replication-independent histone exchange on chromatin. Required for normal chromatin refolding in the coding region of transcribed genes, and for the suppression of spurious transcription. Binds DNA and histones and promotes nucleosome assembly (in vitro). Facilitates formation of tetrameric histone complexes containing histone H3 and H4. Modulates RNA polymerase 1-mediated transcription. Binds DNA, with a preference for branched DNA species, such as Y-form DNA and Holliday junction DNA. The sequence is that of Protein SPT2 homolog (Spty2d1) from Mus musculus (Mouse).